The following is a 139-amino-acid chain: MLIPRKVKHRKQHHPGRTGHATGGTVVSFGEYGIQALTPAYVTNRQIESARIAMTRHVKRGGNVYINIFPDRPLTKKPAETRMGSGKGSVEWWVANVKPGRVLFELSGVDEATAREALTRAIHKLPLKARIIKREEGDA.

The span at 1-17 (MLIPRKVKHRKQHHPGR) shows a compositional bias: basic residues. The tract at residues 1–24 (MLIPRKVKHRKQHHPGRTGHATGG) is disordered.

It belongs to the universal ribosomal protein uL16 family. In terms of assembly, part of the 50S ribosomal subunit.

In terms of biological role, binds 23S rRNA and is also seen to make contacts with the A and possibly P site tRNAs. The sequence is that of Large ribosomal subunit protein uL16 from Clavibacter michiganensis subsp. michiganensis (strain NCPPB 382).